We begin with the raw amino-acid sequence, 162 residues long: ATP synthase subunit b 1 (162 aa).

Residues 3–23 (FLDATFFAFVGLVLFLALVVY) form a helical membrane-spanning segment.

This sequence belongs to the ATPase B chain family. F-type ATPases have 2 components, F(1) - the catalytic core - and F(0) - the membrane proton channel. F(1) has five subunits: alpha(3), beta(3), gamma(1), delta(1), epsilon(1). F(0) has three main subunits: a(1), b(2) and c(10-14). The alpha and beta chains form an alternating ring which encloses part of the gamma chain. F(1) is attached to F(0) by a central stalk formed by the gamma and epsilon chains, while a peripheral stalk is formed by the delta and b chains.

It localises to the cell inner membrane. Its function is as follows. F(1)F(0) ATP synthase produces ATP from ADP in the presence of a proton or sodium gradient. F-type ATPases consist of two structural domains, F(1) containing the extramembraneous catalytic core and F(0) containing the membrane proton channel, linked together by a central stalk and a peripheral stalk. During catalysis, ATP synthesis in the catalytic domain of F(1) is coupled via a rotary mechanism of the central stalk subunits to proton translocation. In terms of biological role, component of the F(0) channel, it forms part of the peripheral stalk, linking F(1) to F(0). The polypeptide is ATP synthase subunit b 1 (Rhizobium johnstonii (strain DSM 114642 / LMG 32736 / 3841) (Rhizobium leguminosarum bv. viciae)).